Reading from the N-terminus, the 145-residue chain is ATP synthase epsilon chain (145 aa).

This sequence belongs to the ATPase epsilon chain family. F-type ATPases have 2 components, CF(1) - the catalytic core - and CF(0) - the membrane proton channel. CF(1) has five subunits: alpha(3), beta(3), gamma(1), delta(1), epsilon(1). CF(0) has three main subunits: a, b and c.

Its subcellular location is the cell inner membrane. In terms of biological role, produces ATP from ADP in the presence of a proton gradient across the membrane. The polypeptide is ATP synthase epsilon chain (Francisella tularensis subsp. holarctica (strain FTNF002-00 / FTA)).